The following is a 130-amino-acid chain: Small ribosomal subunit protein uS9 (130 aa).

This sequence belongs to the universal ribosomal protein uS9 family.

The protein is Small ribosomal subunit protein uS9 of Shewanella denitrificans (strain OS217 / ATCC BAA-1090 / DSM 15013).